Here is a 274-residue protein sequence, read N- to C-terminus: Triosephosphate isomerase (274 aa).

Position 13–15 (13–15 (NWK)) interacts with substrate. Catalysis depends on His-98, which acts as the Electrophile. Residue Glu-170 is the Proton acceptor of the active site. Substrate-binding residues include Gly-176 and Ser-216.

The protein belongs to the triosephosphate isomerase family. Homodimer.

The protein resides in the cytoplasm. It catalyses the reaction D-glyceraldehyde 3-phosphate = dihydroxyacetone phosphate. Its pathway is carbohydrate biosynthesis; gluconeogenesis. The protein operates within carbohydrate degradation; glycolysis; D-glyceraldehyde 3-phosphate from glycerone phosphate: step 1/1. Functionally, involved in the gluconeogenesis. Catalyzes stereospecifically the conversion of dihydroxyacetone phosphate (DHAP) to D-glyceraldehyde-3-phosphate (G3P). This chain is Triosephosphate isomerase, found in Onion yellows phytoplasma (strain OY-M).